The chain runs to 127 residues: Nuclear transport factor 2 (127 aa).

In terms of domain architecture, NTF2 spans 11 to 124 (VGKQFVEHYY…FLLINDFFRL (114 aa)).

The protein localises to the cytoplasm. It is found in the cytosol. Its subcellular location is the nucleus outer membrane. The protein resides in the nucleus. It localises to the nuclear pore complex. The protein localises to the nucleus inner membrane. It is found in the nucleoplasm. Mediates the import of GDP-bound RAN from the cytoplasm into the nucleus which is essential for the function of RAN in cargo receptor-mediated nucleocytoplasmic transport. Thereby, plays indirectly a more general role in cargo receptor-mediated nucleocytoplasmic transport. Interacts with GDP-bound RAN in the cytosol, recruits it to the nuclear pore complex via its interaction with nucleoporins and promotes its nuclear import. The sequence is that of Nuclear transport factor 2 from Dictyostelium discoideum (Social amoeba).